Here is a 283-residue protein sequence, read N- to C-terminus: Protein/nucleic acid deglycase HchA (283 aa).

His86, Glu91, and His123 together coordinate Zn(2+). The Nucleophile role is filled by Cys185.

It belongs to the peptidase C56 family. HchA subfamily. In terms of assembly, homodimer.

The protein localises to the cytoplasm. It carries out the reaction N(omega)-(1-hydroxy-2-oxopropyl)-L-arginyl-[protein] + H2O = lactate + L-arginyl-[protein] + H(+). It catalyses the reaction N(6)-(1-hydroxy-2-oxopropyl)-L-lysyl-[protein] + H2O = lactate + L-lysyl-[protein] + H(+). The catalysed reaction is S-(1-hydroxy-2-oxopropyl)-L-cysteinyl-[protein] + H2O = lactate + L-cysteinyl-[protein] + H(+). The enzyme catalyses N(omega)-(1-hydroxy-2-oxoethyl)-L-arginyl-[protein] + H2O = L-arginyl-[protein] + glycolate + H(+). It carries out the reaction N(6)-(1-hydroxy-2-oxoethyl)-L-lysyl-[protein] + H2O = glycolate + L-lysyl-[protein] + H(+). It catalyses the reaction S-(1-hydroxy-2-oxoethyl)-L-cysteinyl-[protein] + H2O = glycolate + L-cysteinyl-[protein] + H(+). The catalysed reaction is N(2)-(1-hydroxy-2-oxopropyl)-dGTP + H2O = lactate + dGTP + H(+). The enzyme catalyses N(2)-(1-hydroxy-2-oxopropyl)-GTP + H2O = lactate + GTP + H(+). It carries out the reaction N(2)-(1-hydroxy-2-oxopropyl)-GDP + H2O = lactate + GDP + H(+). It catalyses the reaction N(2)-(1-hydroxy-2-oxopropyl)-GMP + H2O = lactate + GMP + H(+). The catalysed reaction is N(2)-(1-hydroxy-2-oxoethyl)-dGTP + H2O = dGTP + glycolate + H(+). The enzyme catalyses N(2)-(1-hydroxy-2-oxoethyl)-GTP + H2O = glycolate + GTP + H(+). It carries out the reaction N(2)-(1-hydroxy-2-oxoethyl)-GDP + H2O = glycolate + GDP + H(+). It catalyses the reaction N(2)-(1-hydroxy-2-oxoethyl)-GMP + H2O = glycolate + GMP + H(+). The catalysed reaction is an N(2)-(1-hydroxy-2-oxopropyl)-guanosine in RNA + H2O = a guanosine in RNA + lactate + H(+). The enzyme catalyses an N(2)-(1-hydroxy-2-oxopropyl)-2'-deoxyguanosine in DNA + H2O = a 2'-deoxyguanosine in DNA + lactate + H(+). It carries out the reaction an N(2)-(1-hydroxy-2-oxoethyl)-guanosine in RNA + H2O = a guanosine in RNA + glycolate + H(+). It catalyses the reaction an N(2)-(1-hydroxy-2-oxoethyl)-2'-deoxyguanosine in DNA + H2O = a 2'-deoxyguanosine in DNA + glycolate + H(+). Functionally, protein and nucleotide deglycase that catalyzes the deglycation of the Maillard adducts formed between amino groups of proteins or nucleotides and reactive carbonyl groups of glyoxals. Thus, functions as a protein deglycase that repairs methylglyoxal- and glyoxal-glycated proteins, and releases repaired proteins and lactate or glycolate, respectively. Deglycates cysteine, arginine and lysine residues in proteins, and thus reactivates these proteins by reversing glycation by glyoxals. Acts on early glycation intermediates (hemithioacetals and aminocarbinols), preventing the formation of Schiff bases and advanced glycation endproducts (AGE). Also functions as a nucleotide deglycase able to repair glycated guanine in the free nucleotide pool (GTP, GDP, GMP, dGTP) and in DNA and RNA. Is thus involved in a major nucleotide repair system named guanine glycation repair (GG repair), dedicated to reversing methylglyoxal and glyoxal damage via nucleotide sanitization and direct nucleic acid repair. Plays an important role in protecting cells from carbonyl stress. This chain is Protein/nucleic acid deglycase HchA, found in Escherichia coli (strain K12 / MC4100 / BW2952).